The primary structure comprises 218 residues: Pyridoxal 5'-phosphate synthase subunit PdxT (218 aa).

54–56 is a binding site for L-glutamine; the sequence is GES. Catalysis depends on C86, which acts as the Nucleophile. L-glutamine is bound by residues R120 and 149–150; that span reads IR. Residues H197 and E199 each act as charge relay system in the active site.

This sequence belongs to the glutaminase PdxT/SNO family. In terms of assembly, in the presence of PdxS, forms a dodecamer of heterodimers. Only shows activity in the heterodimer.

The enzyme catalyses aldehydo-D-ribose 5-phosphate + D-glyceraldehyde 3-phosphate + L-glutamine = pyridoxal 5'-phosphate + L-glutamate + phosphate + 3 H2O + H(+). The catalysed reaction is L-glutamine + H2O = L-glutamate + NH4(+). Its pathway is cofactor biosynthesis; pyridoxal 5'-phosphate biosynthesis. Its function is as follows. Catalyzes the hydrolysis of glutamine to glutamate and ammonia as part of the biosynthesis of pyridoxal 5'-phosphate. The resulting ammonia molecule is channeled to the active site of PdxS. The polypeptide is Pyridoxal 5'-phosphate synthase subunit PdxT (Saccharopolyspora erythraea (strain ATCC 11635 / DSM 40517 / JCM 4748 / NBRC 13426 / NCIMB 8594 / NRRL 2338)).